A 380-amino-acid polypeptide reads, in one-letter code: Cytochrome b (380 aa).

4 helical membrane passes run 34–54, 78–99, 114–134, and 179–199; these read FGSLLGICLLTQILTGLLLAT, WLIRNLHANGASFFFICIYLHI, WNTGIILLLTLMATAFVGYVL, and FFALHFLLPFMIAGLALIHLT. The heme b site is built by His-84 and His-98. Positions 183 and 197 each coordinate heme b. His-202 serves as a coordination point for a ubiquinone. 4 helical membrane-spanning segments follow: residues 227 to 247, 289 to 309, 321 to 341, and 348 to 368; these read LKDILGFIIMFLPLTTLALFS, LGGVLALAASVLVLFLVPLLH, LSQFLFWTLVANLLILTWVGS, and FIIIGQLASLTYFTILLLLFP.

The protein belongs to the cytochrome b family. As to quaternary structure, the cytochrome bc1 complex contains 11 subunits: 3 respiratory subunits (MT-CYB, CYC1 and UQCRFS1), 2 core proteins (UQCRC1 and UQCRC2) and 6 low-molecular weight proteins (UQCRH/QCR6, UQCRB/QCR7, UQCRQ/QCR8, UQCR10/QCR9, UQCR11/QCR10 and a cleavage product of UQCRFS1). This cytochrome bc1 complex then forms a dimer. It depends on heme b as a cofactor.

It localises to the mitochondrion inner membrane. Functionally, component of the ubiquinol-cytochrome c reductase complex (complex III or cytochrome b-c1 complex) that is part of the mitochondrial respiratory chain. The b-c1 complex mediates electron transfer from ubiquinol to cytochrome c. Contributes to the generation of a proton gradient across the mitochondrial membrane that is then used for ATP synthesis. The polypeptide is Cytochrome b (MT-CYB) (Pinguinus impennis (Great auk)).